The following is a 30-amino-acid chain: Cyclotide mela-5 (30 aa).

The segment at residues 1 to 30 (GSAIACGESCFKFKCYTPGCSCSYPICKKD) is a cross-link (cyclopeptide (Gly-Asp)). Disulfide bonds link C6–C20, C10–C22, and C15–C27.

This is a cyclic peptide. Post-translationally, contains 3 disulfide bonds.

In terms of biological role, probably participates in a plant defense mechanism (Potential). Binds to and induces leakage in phospholipd membranes, particularly ones containing 1-palmitoyl-2-oleophosphatidylethanolamine (POPE). The protein is Cyclotide mela-5 of Melicytus latifolius (Norfolk Island mahoe).